The sequence spans 512 residues: MLNDKAIRQSKIIYWSSGIVSICGIIFEVLFGALGSYILGDGVKQYTLTISLFLTGMGIGASLSEKFMRNLIIKFVWIEFCVALIGGFSSFIMFGITAFAPAGTDAFYLYSITLIIGALTGVELPILIRKANEIGVTLNKSTARVLFSDYAGGLIGGVLFVFLFRPYFGMVKTAFLVGLINLTVALIVLWLFRKEIRHFIVHAVIGGVIGVLLIAGLFFGEEMAFNFEQKLYQDPIIHMEESSYQKITVTQDEKDIRLYLDGSLQFSSVDEHRYHEVLVHPAMANVETPENVLILGGGDGIAAKEVLKYQDVKQVTLVDLDPAVVELANENRHLLEINEGALMDEKVEVKNMDAFQFLEDTSEWYDVILVDLPDPNNESLNKLYTKEFYSLVRNHLKPEGTLMVQATSPVFAREVYWTISETISSTNLNTENLHVDVPSFGNWGFVMASREEIDLDIMEIPVSTRFLTDDMMPALTAFGKDEDQQIPNFELKANTLIDPHLIQIYEKAWENY.

A run of 7 helical transmembrane segments spans residues 19 to 39 (IVSICGIIFEVLFGALGSYIL), 48 to 68 (LTISLFLTGMGIGASLSEKFM), 76 to 96 (VWIEFCVALIGGFSSFIMFGI), 108 to 128 (YLYSITLIIGALTGVELPILI), 151 to 171 (AGGLIGGVLFVFLFRPYFGMV), 172 to 192 (KTAFLVGLINLTVALIVLWLF), and 199 to 219 (FIVHAVIGGVIGVLLIAGLFF). Residues 215 to 450 (AGLFFGEEMA…GNWGFVMASR (236 aa)) form the PABS domain. A spermidine synthase region spans residues 217 to 457 (LFFGEEMAFN…ASREEIDLDI (241 aa)). Gln-245 serves as a coordination point for S-methyl-5'-thioadenosine. Residues His-275 and Asp-299 each contribute to the spermidine site. Residues Asp-319 and 353–354 (DA) each bind S-methyl-5'-thioadenosine. Asp-371 functions as the Proton acceptor in the catalytic mechanism.

This sequence belongs to the spermidine/spermine synthase family. In terms of assembly, homodimer or homotetramer.

It is found in the cell membrane. It carries out the reaction S-adenosyl 3-(methylsulfanyl)propylamine + putrescine = S-methyl-5'-thioadenosine + spermidine + H(+). Its pathway is amine and polyamine biosynthesis; spermidine biosynthesis; spermidine from putrescine: step 1/1. Functionally, catalyzes the irreversible transfer of a propylamine group from the amino donor S-adenosylmethioninamine (decarboxy-AdoMet) to putrescine (1,4-diaminobutane) to yield spermidine. The sequence is that of Polyamine aminopropyltransferase from Oceanobacillus iheyensis (strain DSM 14371 / CIP 107618 / JCM 11309 / KCTC 3954 / HTE831).